We begin with the raw amino-acid sequence, 59 residues long: Large ribosomal subunit protein uL30 (59 aa).

Belongs to the universal ribosomal protein uL30 family. Part of the 50S ribosomal subunit.

This chain is Large ribosomal subunit protein uL30, found in Yersinia pseudotuberculosis serotype I (strain IP32953).